Consider the following 461-residue polypeptide: Cysteine--tRNA ligase (461 aa).

A Zn(2+)-binding site is contributed by C28. Positions 30-40 (ITIYDLCHIGH) match the 'HIGH' region motif. Positions 209, 234, and 238 each coordinate Zn(2+). A 'KMSKS' region motif is present at residues 266-270 (KMSKS). K269 serves as a coordination point for ATP.

The protein belongs to the class-I aminoacyl-tRNA synthetase family. In terms of assembly, monomer. It depends on Zn(2+) as a cofactor.

It localises to the cytoplasm. The enzyme catalyses tRNA(Cys) + L-cysteine + ATP = L-cysteinyl-tRNA(Cys) + AMP + diphosphate. This is Cysteine--tRNA ligase from Photorhabdus laumondii subsp. laumondii (strain DSM 15139 / CIP 105565 / TT01) (Photorhabdus luminescens subsp. laumondii).